A 400-amino-acid polypeptide reads, in one-letter code: F-box/kelch-repeat protein At4g19870 (400 aa).

Residues 1 to 10 (MKRQAKPPEK) show a composition bias toward basic and acidic residues. A disordered region spans residues 1-33 (MKRQAKPPEKKTKRTTNASSPTPSSSSPSLSSL). The span at 19-33 (SSPTPSSSSPSLSSL) shows a compositional bias: low complexity. One can recognise an F-box domain in the interval 27–73 (SPSLSSLPDEIVENCLARISRSYYPTLSIVSKSFRSIISSTELYVAR). Kelch repeat units follow at residues 146–192 (EIYV…LYDG), 194–240 (IYVI…RIAE), and 242–284 (EGKI…SVLY).

The protein is F-box/kelch-repeat protein At4g19870 of Arabidopsis thaliana (Mouse-ear cress).